Consider the following 483-residue polypeptide: Probable glycosyltransferase 6 (483 aa).

Topologically, residues 1–40 are cytoplasmic; sequence MAASETAPFGVSAASKGGGGVAGARAQHGQLAVAGRVHDA. A helical; Signal-anchor for type II membrane protein membrane pass occupies residues 41-61; it reads LVFAAGAVAAVLVLLATASFL. Residues 62–483 are Lumenal-facing; it reads SPMPVTNLVA…PLPFDYPAAR (422 aa). Asn-144 carries N-linked (GlcNAc...) asparagine glycosylation.

It belongs to the glycosyltransferase 34 family.

It is found in the golgi apparatus membrane. In terms of biological role, probable glycosyltransferase that may be involved in the biosynthesis of xyloglucan. This is Probable glycosyltransferase 6 from Oryza sativa subsp. japonica (Rice).